Consider the following 328-residue polypeptide: Gonadotropin-releasing hormone receptor (328 aa).

At 1–38 the chain is on the extracellular side; the sequence is MANSASPEQNQNHCSAINSSILLTQGNLPTLTLSGKIR. An N-linked (GlcNAc...) asparagine glycan is attached at Asn18. A helical membrane pass occupies residues 39 to 58; sequence VTVTFFLFLLSTAFNASFLL. Residues 59–77 lie on the Cytoplasmic side of the membrane; it reads KLQKWTQRKEKGKKLSRMK. Residues 78 to 97 form a helical membrane-spanning segment; that stretch reads VLLKHLTLANLLETLIVMPL. Topologically, residues 98 to 115 are extracellular; sequence DGMWNITVQWYAGEFLCK. Asn102 carries N-linked (GlcNAc...) asparagine glycosylation. An intrachain disulfide couples Cys114 to Cys196. Residues 116 to 137 form a helical membrane-spanning segment; it reads VLSYLKLFSMYAPAFMMVVISL. Over 138 to 164 the chain is Cytoplasmic; sequence DRSLAITRPLAVKSNSRLGRFMIGLAW. Residues 165–184 traverse the membrane as a helical segment; that stretch reads LLSSIFAGPQLYIFRMIHLA. Over 185–212 the chain is Extracellular; it reads DSSGQTEGFSQCVTHGSFPQWWHQAFYN. The chain crosses the membrane as a helical span at residues 213–232; the sequence is FFTFSCLFIIPLLIMLICNA. The Cytoplasmic portion of the chain corresponds to 233-281; sequence KIMFTLTRVLQQDPHNLQLNQSKNNIPRARLRTLKMTVAFAASFIVCWT. Residues 282-300 traverse the membrane as a helical segment; that stretch reads PYYVLGIWYWFDPEMVNRV. Residues 301-306 are Extracellular-facing; that stretch reads SDPVNH. Residues 307–326 traverse the membrane as a helical segment; it reads FFFLFAFLNPCFDPLIYGYF. Topologically, residues 327-328 are cytoplasmic; it reads SL.

Belongs to the G-protein coupled receptor 1 family. As to expression, pituitary gland.

Its subcellular location is the cell membrane. In terms of biological role, receptor for gonadotropin releasing hormone (GnRH) that mediates the action of GnRH to stimulate the secretion of the gonadotropic hormones luteinizing hormone (LH) and follicle-stimulating hormone (FSH). This receptor mediates its action by association with G-proteins that activate a phosphatidylinositol-calcium second messenger system. The chain is Gonadotropin-releasing hormone receptor (GNRHR) from Sus scrofa (Pig).